A 303-amino-acid chain; its full sequence is MTWQFPDRLSTNSALPGPAFSGQPAVDLSSFADFLRRQAPELLPAALGGAQSGPASSSGGTGQLPHGTTIVALKYPGGVVLAGDRRSTQGNMIAGRDVKKVYITDDYTATGIAGTAAIAVEFARLYAVELEHYEKLEGVPLTFAGKVNRLAIMVRGNLAAAMQGLVALPLLAGYDIDARDPEGAGRIVSFDAAGGWNLEEEGYQSVGSGSIFAKSSMKKLYSQVVDADSAVRVAIEALYDAADDDSATGGPDLVRGIYPTAVTIGAEGALEVPESRIAELAREVIQSRSRADTFGPDAAGGDK.

Residues 1 to 67 (MTWQFPDRLS…SGGTGQLPHG (67 aa)) constitute a propeptide, removed in mature form; by autocatalysis. Threonine 68 acts as the Nucleophile in catalysis.

This sequence belongs to the peptidase T1B family. As to quaternary structure, the 20S proteasome core is composed of 14 alpha and 14 beta subunits that assemble into four stacked heptameric rings, resulting in a barrel-shaped structure. The two inner rings, each composed of seven catalytic beta subunits, are sandwiched by two outer rings, each composed of seven alpha subunits. The catalytic chamber with the active sites is on the inside of the barrel. Has a gated structure, the ends of the cylinder being occluded by the N-termini of the alpha-subunits. Is capped by the proteasome-associated ATPase, ARC.

Its subcellular location is the cytoplasm. The catalysed reaction is Cleavage of peptide bonds with very broad specificity.. Its pathway is protein degradation; proteasomal Pup-dependent pathway. Its activity is regulated as follows. The formation of the proteasomal ATPase ARC-20S proteasome complex, likely via the docking of the C-termini of ARC into the intersubunit pockets in the alpha-rings, may trigger opening of the gate for substrate entry. Interconversion between the open-gate and close-gate conformations leads to a dynamic regulation of the 20S proteasome proteolysis activity. Its function is as follows. Component of the proteasome core, a large protease complex with broad specificity involved in protein degradation. This chain is Proteasome subunit beta, found in Mycobacterium avium (strain 104).